The sequence spans 254 residues: Sec-independent protein translocase protein TatC (254 aa).

The next 6 membrane-spanning stretches (helical) occupy residues 40–60 (IFLS…FVKP), 82–104 (FFFV…FILY), 125–145 (VVLG…YALI), 172–192 (FVLL…IQVV), 210–230 (FVIL…DPLT), and 233–253 (LLAG…RLLG).

Belongs to the TatC family. As to quaternary structure, forms a complex with TatA.

The protein localises to the cell inner membrane. Functionally, part of the twin-arginine translocation (Tat) system that transports large folded proteins containing a characteristic twin-arginine motif in their signal peptide across membranes. The chain is Sec-independent protein translocase protein TatC from Synechocystis sp. (strain ATCC 27184 / PCC 6803 / Kazusa).